Reading from the N-terminus, the 346-residue chain is MGQDKLKVAVLFGGSSEERDVSIASGAQVIQALRSAGHQVLAVDTASGLLGAEEERRLLASKVKEVPPDSDSLAIIRSGKQSLLSAGELAGVDVFFLALHGGTGEDGTLQALLDAGGFAYTGSGHLASAMAMDKDVAKRLFLAAGVETASWLMAPASEEEVREQLGFPLVVKPNSQGSTVGLSIVHSQAELQPAIELAGRYGDEVMLERFVAGREVTVGVLDDQALPVGEILLGGQEVFDYEHKYQAGAVREVFPADLPPAIAAEAQRLALKVHRALKLSGYSRTDFRLDEQGRLWCLEVNTLPGMTATSLLPQAAAAAGIGFAELCERICRLGIERCKGARKARS.

Residues 138-332 form the ATP-grasp domain; sequence KRLFLAAGVE…FAELCERICR (195 aa). 164-217 contacts ATP; sequence QLGFPLVVKPNSQGSTVGLSIVHSQAELQPAIELAGRYGDEVMLERFVAGREVT. Residues Asp-286, Glu-299, and Asn-301 each contribute to the Mg(2+) site.

Belongs to the D-alanine--D-alanine ligase family. Requires Mg(2+) as cofactor. Mn(2+) serves as cofactor.

It is found in the cytoplasm. It catalyses the reaction 2 D-alanine + ATP = D-alanyl-D-alanine + ADP + phosphate + H(+). It functions in the pathway cell wall biogenesis; peptidoglycan biosynthesis. In terms of biological role, cell wall formation. The polypeptide is D-alanine--D-alanine ligase A (Pseudomonas aeruginosa (strain ATCC 15692 / DSM 22644 / CIP 104116 / JCM 14847 / LMG 12228 / 1C / PRS 101 / PAO1)).